Consider the following 315-residue polypeptide: MLDSKLKAPVFTVRTQGREYGEFVLEPLERGFGVTLGNPLRRILLSSIPGTAVTSVYIEDVLHEFSTIPGVKEDVVEIILNLKELVVRFLNPSLQTVTLLLKAEGPKEVKARDFLPVADVEIMNPDLHIATLEEGGRLNMEVRVDRGVGYVPAEKHGIKDRINAIPVDAVFSPVRRVAFQVEDTRLGQRTDLDKLTLRIWTDGSVTPLEALNQAVEILREHLTYFSNPQAAAVAAPEEAKEPEAPPEQEEELDLPLEELGLSTRVLHSLKEEGIESVRALLALNLKDLKNIPGIGERSLEEIKEALEKKGFTLKE.

Residues 1-229 are alpha N-terminal domain (alpha-NTD); that stretch reads MLDSKLKAPV…EHLTYFSNPQ (229 aa). The segment at 247-315 is alpha C-terminal domain (alpha-CTD); it reads EQEEELDLPL…LEKKGFTLKE (69 aa).

Belongs to the RNA polymerase alpha chain family. In terms of assembly, homodimer. The RNAP catalytic core consists of 2 alpha, 1 beta, 1 beta' and 1 omega subunit. When a sigma factor is associated with the core the holoenzyme is formed, which can initiate transcription.

It carries out the reaction RNA(n) + a ribonucleoside 5'-triphosphate = RNA(n+1) + diphosphate. Functionally, DNA-dependent RNA polymerase catalyzes the transcription of DNA into RNA using the four ribonucleoside triphosphates as substrates. In Thermus thermophilus (strain ATCC BAA-163 / DSM 7039 / HB27), this protein is DNA-directed RNA polymerase subunit alpha.